A 550-amino-acid polypeptide reads, in one-letter code: MDIKRTVLWVIFFMSAVMLFDNWQRDHGRPSMFFPSATQTKTAAPAAPGSSTTASQPTDLPQTTAAAPGSTTPAAQQAQLVSFSTDVYRGQIDTRGGTLSKLTLVKPGEGKQPDQVITLFDHTADHTYLARTGLLGGDFPNHTDVFTPVAGQATDMTGNTLTLSFQSPEKGGLKVVKTYTFTRGSYVINVDTKIQNVGTAPVKPTAYMELVRDSQPVETPRFSHTFIGPAVYTEQHHFQKLTFGDIDKNKQDYATSADNGWVAMVQHYFASAWIPQQGAKRDIYVEKIDPSLYRVGVKQPLQTIAPGQTIDVSARLFAGPEEERMLEGIAPGLELVKDYGWVTIIAKPLFWLLEKIHGYVGNWGWAIVLLTLLIKAVFFPLSAASYKSMARMKEITPRMQALRERFKSDPQKMNAALMELYKTEKVNPFGGCLPVVIQIPVFISLYWVLLSSVEMRGAPWILWIHDLSQQDPYFILPVLMAVSMFVQTKLNPTPPDPVQAKMMMFMPIAFSVMFFFFPAGLVLYYVVNNVLSIAQQYYITRMMGQKKKAA.

The chain crosses the membrane as a helical span at residues 3–23 (IKRTVLWVIFFMSAVMLFDNW). A disordered region spans residues 34–73 (FPSATQTKTAAPAAPGSSTTASQPTDLPQTTAAAPGSTTP). Over residues 35 to 73 (PSATQTKTAAPAAPGSSTTASQPTDLPQTTAAAPGSTTP) the composition is skewed to low complexity. The next 4 helical transmembrane spans lie at 363–383 (WGWA…PLSA), 429–449 (FGGC…YWVL), 472–492 (PYFI…KLNP), and 503–523 (MMFM…GLVL).

This sequence belongs to the OXA1/ALB3/YidC family. Type 1 subfamily. Interacts with the Sec translocase complex via SecD. Specifically interacts with transmembrane segments of nascent integral membrane proteins during membrane integration.

It is found in the cell inner membrane. Its function is as follows. Required for the insertion and/or proper folding and/or complex formation of integral membrane proteins into the membrane. Involved in integration of membrane proteins that insert both dependently and independently of the Sec translocase complex, as well as at least some lipoproteins. Aids folding of multispanning membrane proteins. The polypeptide is Membrane protein insertase YidC (Paraburkholderia phymatum (strain DSM 17167 / CIP 108236 / LMG 21445 / STM815) (Burkholderia phymatum)).